The primary structure comprises 63 residues: Large ribosomal subunit protein bL35 (63 aa).

The protein belongs to the bacterial ribosomal protein bL35 family.

This chain is Large ribosomal subunit protein bL35, found in Campylobacter hominis (strain ATCC BAA-381 / DSM 21671 / CCUG 45161 / LMG 19568 / NCTC 13146 / CH001A).